Here is a 161-residue protein sequence, read N- to C-terminus: MLNRKNKENIISKINKITKSSLSILIVDPTGITSNQMNNLRKSSRKLNVNIKQVRNTLMRFAIVDTEFDCLEKYIKGSNLIAFSHSHPGSAARIFKNFTKENNKIKIKLAVFERKIITDSNIDYLANLPTHEESVINFINIIQEASIKKLIRILILINNNK.

This sequence belongs to the universal ribosomal protein uL10 family. In terms of assembly, part of the ribosomal stalk of the 50S ribosomal subunit. The N-terminus interacts with L11 and the large rRNA to form the base of the stalk. The C-terminus forms an elongated spine to which L12 dimers bind in a sequential fashion forming a multimeric L10(L12)X complex.

Its function is as follows. Forms part of the ribosomal stalk, playing a central role in the interaction of the ribosome with GTP-bound translation factors. This is Large ribosomal subunit protein uL10 (rplJ) from Wigglesworthia glossinidia brevipalpis.